Reading from the N-terminus, the 616-residue chain is Putative L-type lectin-domain containing receptor kinase I.10 (616 aa).

A signal peptide spans 1–22; it reads MAWGLFQILMISFFHLIKLSSQ. Residues 23-288 are Extracellular-facing; the sequence is QETSFVYETF…RAEHKNLSPL (266 aa). The interval 24–258 is legume-lectin like; that stretch reads ETSFVYETFR…YQYVLSWSFS (235 aa). 5 N-linked (GlcNAc...) asparagine glycosylation sites follow: N56, N124, N181, N204, and N225. The chain crosses the membrane as a helical span at residues 289-309; the sequence is FIDLLGFLAIMGLCTLTGMYF. Topologically, residues 310-616 are cytoplasmic; the sequence is FKRGKYAEIT…SAASSATNSP (307 aa). The region spanning 343–616 is the Protein kinase domain; sequence FHKDGFLGKG…SAASSATNSP (274 aa). ATP is bound by residues 349–357 and K371; that span reads LGKGGFGEV. D467 acts as the Proton acceptor in catalysis.

In the C-terminal section; belongs to the protein kinase superfamily. Ser/Thr protein kinase family. This sequence in the N-terminal section; belongs to the leguminous lectin family.

It localises to the cell membrane. The catalysed reaction is L-seryl-[protein] + ATP = O-phospho-L-seryl-[protein] + ADP + H(+). It carries out the reaction L-threonyl-[protein] + ATP = O-phospho-L-threonyl-[protein] + ADP + H(+). This is Putative L-type lectin-domain containing receptor kinase I.10 (LECRK110) from Arabidopsis thaliana (Mouse-ear cress).